The following is a 956-amino-acid chain: Zinc fingers and homeoboxes protein 3 (956 aa).

Residues 1–107 form a required for nuclear localization region; that stretch reads MASKRKSTTP…SEHTDFNKDP (107 aa). Positions 22–66 are disordered; the sequence is DASMEAQPAETLPEGPQQDLPPEASAASSEAAQNPSSTDGSTLAN. A compositionally biased stretch (low complexity) spans 42-58; the sequence is PPEASAASSEAAQNPSS. C2H2-type zinc fingers lie at residues 77–100 and 109–132; these read YSCK…NSEH and FVCS…ATCH. A required for homodimerization and interaction with NFYA region spans residues 242–488; the sequence is ASASSAKNPH…LLTACPSITS (247 aa). The required for repressor activity stretch occupies residues 303-502; the sequence is LSSIPTYNAA…DASIYKNKKS (200 aa). 2 consecutive DNA-binding regions (homeobox) follow at residues 304-363 and 494-553; these read SSIP…GISW and ASIY…RNLK. The segment at 497–555 is required for nuclear localization; it reads YKNKKSHEQLSALKGSFCRNQFPGQSEVEHLTKVTGLSTREVRKWFSDRRYHCRNLKGS. 2 disordered regions span residues 598-618 and 666-695; these read PSAK…KYKE and KVNA…GEED. 2 positions are modified to phosphoserine: Ser599 and Ser604. A DNA-binding region (homeobox 3) is located at residues 612–671; the sequence is TPTKYKERAPEQLRALESSFAQNPLPLDEELDRLRSETKMTRREIDSWFSERRKKVNAEE. A compositionally biased stretch (basic and acidic residues) spans 666–677; it reads KVNAEETKKAEE. Residues 679 to 695 are compositionally biased toward acidic residues; it reads ASQEEEEAAEDEGGEED. Phosphoserine occurs at positions 680, 708, and 723. DNA-binding regions (homeobox) lie at residues 764 to 823 and 835 to 894; these read PGKV…KNGQ and FPPG…TRAV. The disordered stretch occupies residues 890 to 956; it reads ETRAVADTGS…PQAGRQLETD (67 aa). Phosphoserine is present on residues Ser927 and Ser946.

This sequence belongs to the ZHX family. As to quaternary structure, homodimer (via homeobox domain 1). Heterodimer with ZHX1 (via homeobox domain 1). Heterodimer with ZHX2 (via homeobox domain 1). Heterodimerization with ZHX1 is a prerequisite for repressor activity. Interacts with NFYA. As to expression, widely expressed. High expression in kidney. Expressed during osteogenic differentiation.

Its subcellular location is the nucleus. In terms of biological role, acts as a transcriptional repressor. Involved in the early stages of mesenchymal stem cell (MSC) osteogenic differentiation. Is a regulator of podocyte gene expression during primary glomerula disease. Binds to promoter DNA. This chain is Zinc fingers and homeoboxes protein 3 (ZHX3), found in Homo sapiens (Human).